We begin with the raw amino-acid sequence, 370 residues long: Gibberellin 2-beta-dioxygenase 2 (370 aa).

Residues 186-306 (DNDSLIRINH…RLSTIYFAAP (121 aa)) enclose the Fe2OG dioxygenase domain. Tyr196 contacts 2-oxoglutarate. The Fe cation site is built by His224, Asp226, and His287. Residues Arg297 and Ser299 each contribute to the 2-oxoglutarate site.

This sequence belongs to the iron/ascorbate-dependent oxidoreductase family. GA2OX subfamily. Fe(2+) serves as cofactor.

It carries out the reaction gibberellin A1 + 2-oxoglutarate + O2 = gibberellin A8 + succinate + CO2. Functionally, catalyzes the 2-beta-hydroxylation of several biologically active gibberellins, leading to the homeostatic regulation of their endogenous level. Catabolism of gibberellins (GAs) plays a central role in plant development. The sequence is that of Gibberellin 2-beta-dioxygenase 2 from Oryza sativa subsp. japonica (Rice).